The following is a 1500-amino-acid chain: Synaptonemal complex protein 2 (1500 aa).

A phosphoserine mark is found at Ser-457 and Ser-458. Thr-464 is subject to Phosphothreonine. Residue Ser-487 is modified to Phosphoserine. The residue at position 496 (Thr-496) is a Phosphothreonine. Residues Ser-500, Ser-509, Ser-518, and Ser-527 each carry the phosphoserine modification. The disordered stretch occupies residues 512–548 (KAVSKTSESGMDYAASPKSRQSDGRKRWNNRANHNKT). Thr-608 and Thr-633 each carry phosphothreonine. Ser-646, Ser-650, and Ser-741 each carry phosphoserine. Residues 796–820 (NPSDSMMSTRKLKEPQDGSGFSKKP) form a disordered region. Ser-914 bears the Phosphoserine mark. A Phosphothreonine modification is found at Thr-916. Disordered regions lie at residues 940–1010 (LMDY…TSES) and 1029–1084 (KEET…SASV). Over residues 948 to 958 (NTTKYKSRKSR) the composition is skewed to basic residues. Positions 977–989 (MKNDYEVVVDGRT) are enriched in basic and acidic residues. Positions 990–1000 (RLPRRATKTKK) are enriched in basic residues. Over residues 1059-1076 (PSEEQKNSSRLREGREDS) the composition is skewed to basic and acidic residues. Residues Ser-1115, Ser-1117, Ser-1124, Ser-1133, Ser-1140, Ser-1144, Ser-1156, Ser-1159, and Ser-1164 each carry the phosphoserine modification. Position 1168 is a phosphothreonine (Thr-1168). Residues Ser-1183, Ser-1213, and Ser-1216 each carry the phosphoserine modification. The disordered stretch occupies residues 1208-1234 (YMEPESPESCDNHMQNKREGNHAASPL). The span at 1217–1228 (CDNHMQNKREGN) shows a compositional bias: basic and acidic residues. Phosphoserine is present on residues Ser-1232, Ser-1275, and Ser-1277. Thr-1313 bears the Phosphothreonine mark. Positions 1388 to 1429 (LLDELEKVEKDSQTLRDLEKELVDIEEKLVQKMRAYHRCERE) form a coiled coil.

Belongs to the SYCP2 family. In terms of assembly, component of the lateral elements of synaptonemal complexes. Heterodimer with SYCP3. Interacts with SMC1A and SMC3. Interacts with TEX11. In terms of processing, phosphorylated. In terms of tissue distribution, detected in testis and spermatocytes (at protein level).

The protein localises to the nucleus. Its subcellular location is the chromosome. In terms of biological role, major component of the axial/lateral elements of synaptonemal complexes (SCS) during meiotic prophase. Plays a role in the assembly of synaptonemal complexes. Required for normal meiotic chromosome synapsis during oocyte and spermatocyte development and for normal male and female fertility. Required for insertion of SYCP3 into synaptonemal complexes. May be involved in the organization of chromatin by temporarily binding to DNA scaffold attachment regions. Requires SYCP3, but not SYCP1, in order to be incorporated into the axial/lateral elements. The chain is Synaptonemal complex protein 2 (Sycp2) from Mus musculus (Mouse).